The sequence spans 454 residues: V-type ATP synthase subunit I 2 (454 aa).

The tract at residues 101-121 (EREGDAPSVPRGKSSVAHDSA) is disordered. Helical transmembrane passes span 254–274 (LLFG…VLGL), 293–313 (VFLS…EFFA), 351–371 (MAFF…GLII), and 424–444 (ACLS…SVCV).

Belongs to the V-ATPase 116 kDa subunit family.

It is found in the cell membrane. Functionally, produces ATP from ADP in the presence of a proton gradient across the membrane. This is V-type ATP synthase subunit I 2 (atpI2) from Treponema pallidum (strain Nichols).